The chain runs to 97 residues: Phosphoribosyl-ATP pyrophosphatase (97 aa).

The protein belongs to the PRA-PH family.

It localises to the cytoplasm. It catalyses the reaction 1-(5-phospho-beta-D-ribosyl)-ATP + H2O = 1-(5-phospho-beta-D-ribosyl)-5'-AMP + diphosphate + H(+). It functions in the pathway amino-acid biosynthesis; L-histidine biosynthesis; L-histidine from 5-phospho-alpha-D-ribose 1-diphosphate: step 2/9. This Methanoculleus marisnigri (strain ATCC 35101 / DSM 1498 / JR1) protein is Phosphoribosyl-ATP pyrophosphatase.